We begin with the raw amino-acid sequence, 599 residues long: MFS-type transporter ucsM (599 aa).

Basic and acidic residues predominate over residues 23–34 (AHHHGKEREAHR). The interval 23–42 (AHHHGKEREAHRQSLSSVPG) is disordered. A run of 8 helical transmembrane segments spans residues 147 to 167 (VALG…GAWL), 178 to 198 (ILIG…GAVP), 204 to 224 (GKGT…AGLF), 263 to 283 (IMLI…ATVY), 291 to 311 (WLAF…LWYL), 386 to 406 (IFLY…ILPS), 424 to 444 (FNPI…YPAL), and 454 to 474 (ISRI…SSLV). A glycan (N-linked (GlcNAc...) asparagine) is linked at N517. Transmembrane regions (helical) follow at residues 539 to 559 (LFLF…PAIV) and 563 to 583 (LVWV…IFWV).

Belongs to the major facilitator superfamily. Proton-dependent oligopeptide transporter (POT/PTR) (TC 2.A.17) family.

The protein localises to the membrane. MFS-type transporter; part of the gene cluster that mediates the biosynthesis of UCS1025A, a member of the pyrrolizidinone family that acts as a strong telomerase inhibitor and displays potent antibacterial and antitumor properties. These compounds share a hemiaminal-containing pyrrolizidinone core fused with a gamma-lactone, giving a furopyrrolizidine that is connected to a decalin fragment. The chain is MFS-type transporter ucsM from Acremonium sp.